Here is a 256-residue protein sequence, read N- to C-terminus: Alcohol dehydrogenase (256 aa).

12-35 (FVAGLGGIGLDTSKELVKRDLKNL) provides a ligand contact to NAD(+). Position 140 (Ser-140) interacts with substrate. Tyr-153 acts as the Proton acceptor in catalysis.

Belongs to the short-chain dehydrogenases/reductases (SDR) family. In terms of assembly, homodimer.

It catalyses the reaction a primary alcohol + NAD(+) = an aldehyde + NADH + H(+). The catalysed reaction is a secondary alcohol + NAD(+) = a ketone + NADH + H(+). This chain is Alcohol dehydrogenase (Adh), found in Drosophila erecta (Fruit fly).